Consider the following 360-residue polypeptide: Dual-specificity RNA methyltransferase RlmN (360 aa).

E93 functions as the Proton acceptor in the catalytic mechanism. The 228-residue stretch at 99–326 (EEDRNTLCIS…VITRSSRGAD (228 aa)) folds into the Radical SAM core domain. C106 and C331 are joined by a disulfide. [4Fe-4S] cluster is bound by residues C113, C117, and C120. Residues 158–159 (GE), S190, 212–214 (SLN), and N288 each bind S-adenosyl-L-methionine. The active-site S-methylcysteine intermediate is C331.

This sequence belongs to the radical SAM superfamily. RlmN family. [4Fe-4S] cluster serves as cofactor.

The protein resides in the cytoplasm. It carries out the reaction adenosine(2503) in 23S rRNA + 2 reduced [2Fe-2S]-[ferredoxin] + 2 S-adenosyl-L-methionine = 2-methyladenosine(2503) in 23S rRNA + 5'-deoxyadenosine + L-methionine + 2 oxidized [2Fe-2S]-[ferredoxin] + S-adenosyl-L-homocysteine. The enzyme catalyses adenosine(37) in tRNA + 2 reduced [2Fe-2S]-[ferredoxin] + 2 S-adenosyl-L-methionine = 2-methyladenosine(37) in tRNA + 5'-deoxyadenosine + L-methionine + 2 oxidized [2Fe-2S]-[ferredoxin] + S-adenosyl-L-homocysteine. Functionally, specifically methylates position 2 of adenine 2503 in 23S rRNA and position 2 of adenine 37 in tRNAs. m2A2503 modification seems to play a crucial role in the proofreading step occurring at the peptidyl transferase center and thus would serve to optimize ribosomal fidelity. The sequence is that of Dual-specificity RNA methyltransferase RlmN from Geobacter sulfurreducens (strain ATCC 51573 / DSM 12127 / PCA).